We begin with the raw amino-acid sequence, 366 residues long: NADH-quinone oxidoreductase subunit D (366 aa).

Belongs to the complex I 49 kDa subunit family. In terms of assembly, NDH-1 is composed of 14 different subunits. Subunits NuoB, C, D, E, F, and G constitute the peripheral sector of the complex.

It localises to the cell membrane. It catalyses the reaction a quinone + NADH + 5 H(+)(in) = a quinol + NAD(+) + 4 H(+)(out). Functionally, NDH-1 shuttles electrons from NADH, via FMN and iron-sulfur (Fe-S) centers, to quinones in the respiratory chain. The immediate electron acceptor for the enzyme in this species is believed to be a menaquinone. Couples the redox reaction to proton translocation (for every two electrons transferred, four hydrogen ions are translocated across the cytoplasmic membrane), and thus conserves the redox energy in a proton gradient. This Bacillus thuringiensis (strain Al Hakam) protein is NADH-quinone oxidoreductase subunit D.